The primary structure comprises 593 residues: NADH-quinone oxidoreductase subunit C/D (593 aa).

Residues 1–184 (MTADNALYIP…DPYSLTLAKQ (184 aa)) form an NADH dehydrogenase I subunit C region. The segment at 208–593 (DYMFLNLGPN…IDFVMADVDR (386 aa)) is NADH dehydrogenase I subunit D.

It in the N-terminal section; belongs to the complex I 30 kDa subunit family. The protein in the C-terminal section; belongs to the complex I 49 kDa subunit family. In terms of assembly, NDH-1 is composed of 13 different subunits. Subunits NuoB, CD, E, F, and G constitute the peripheral sector of the complex.

The protein localises to the cell inner membrane. It carries out the reaction a quinone + NADH + 5 H(+)(in) = a quinol + NAD(+) + 4 H(+)(out). Functionally, NDH-1 shuttles electrons from NADH, via FMN and iron-sulfur (Fe-S) centers, to quinones in the respiratory chain. The immediate electron acceptor for the enzyme in this species is believed to be ubiquinone. Couples the redox reaction to proton translocation (for every two electrons transferred, four hydrogen ions are translocated across the cytoplasmic membrane), and thus conserves the redox energy in a proton gradient. The polypeptide is NADH-quinone oxidoreductase subunit C/D (Pseudomonas savastanoi pv. phaseolicola (strain 1448A / Race 6) (Pseudomonas syringae pv. phaseolicola (strain 1448A / Race 6))).